Reading from the N-terminus, the 597-residue chain is Elongation factor 4 (597 aa).

Residues 2–184 (DHIRNFSIIA…ALIAKVPPPK (183 aa)) enclose the tr-type G domain. GTP is bound by residues 14-19 (DHGKST) and 131-134 (NKID).

The protein belongs to the TRAFAC class translation factor GTPase superfamily. Classic translation factor GTPase family. LepA subfamily.

Its subcellular location is the cell inner membrane. It carries out the reaction GTP + H2O = GDP + phosphate + H(+). Required for accurate and efficient protein synthesis under certain stress conditions. May act as a fidelity factor of the translation reaction, by catalyzing a one-codon backward translocation of tRNAs on improperly translocated ribosomes. Back-translocation proceeds from a post-translocation (POST) complex to a pre-translocation (PRE) complex, thus giving elongation factor G a second chance to translocate the tRNAs correctly. Binds to ribosomes in a GTP-dependent manner. This is Elongation factor 4 from Cupriavidus taiwanensis (strain DSM 17343 / BCRC 17206 / CCUG 44338 / CIP 107171 / LMG 19424 / R1) (Ralstonia taiwanensis (strain LMG 19424)).